The following is a 312-amino-acid chain: Protoheme IX farnesyltransferase (312 aa).

Transmembrane regions (helical) follow at residues 34 to 54, 56 to 76, 119 to 139, 152 to 172, 179 to 199, 225 to 245, 248 to 268, and 283 to 303; these read LVIF…HPVL, ITSL…NMAL, ILVN…YVVI, IVIG…AATG, LLLF…LALF, ILLY…LGYF, VYGV…IEVF, and LFAF…LEAV.

It belongs to the UbiA prenyltransferase family. Protoheme IX farnesyltransferase subfamily.

The protein localises to the cell inner membrane. The catalysed reaction is heme b + (2E,6E)-farnesyl diphosphate + H2O = Fe(II)-heme o + diphosphate. It functions in the pathway porphyrin-containing compound metabolism; heme O biosynthesis; heme O from protoheme: step 1/1. Its function is as follows. Converts heme B (protoheme IX) to heme O by substitution of the vinyl group on carbon 2 of heme B porphyrin ring with a hydroxyethyl farnesyl side group. The chain is Protoheme IX farnesyltransferase from Bradyrhizobium sp. (strain BTAi1 / ATCC BAA-1182).